The chain runs to 274 residues: Thiamine kinase (274 aa).

The protein belongs to the thiamine kinase family.

The enzyme catalyses thiamine + ATP = thiamine phosphate + ADP + H(+). It functions in the pathway cofactor biosynthesis; thiamine diphosphate biosynthesis; thiamine phosphate from thiamine: step 1/1. In terms of biological role, catalyzes the ATP-dependent phosphorylation of thiamine to thiamine phosphate. Is involved in thiamine salvage. This chain is Thiamine kinase, found in Escherichia coli O17:K52:H18 (strain UMN026 / ExPEC).